We begin with the raw amino-acid sequence, 510 residues long: 2,3-bisphosphoglycerate-independent phosphoglycerate mutase (510 aa).

Positions 13 and 63 each coordinate Mn(2+). Ser-63 functions as the Phosphoserine intermediate in the catalytic mechanism. Substrate-binding positions include His-124, 154–155 (RD), Arg-186, Arg-192, 262–265 (RADR), and Lys-334. Asp-401, His-405, Asp-442, His-443, and His-461 together coordinate Mn(2+).

Belongs to the BPG-independent phosphoglycerate mutase family. As to quaternary structure, monomer. It depends on Mn(2+) as a cofactor.

The catalysed reaction is (2R)-2-phosphoglycerate = (2R)-3-phosphoglycerate. Its pathway is carbohydrate degradation; glycolysis; pyruvate from D-glyceraldehyde 3-phosphate: step 3/5. Functionally, catalyzes the interconversion of 2-phosphoglycerate and 3-phosphoglycerate. The polypeptide is 2,3-bisphosphoglycerate-independent phosphoglycerate mutase (Aliivibrio fischeri (strain MJ11) (Vibrio fischeri)).